The following is a 242-amino-acid chain: Cysteine-rich venom protein helothermine (242 aa).

Residues 1–19 (MILLSLYLCLAAMLHQSEG) form the signal peptide. The region spanning 41-169 (DKHNNLRRIV…TYKYYQVCQY (129 aa)) is the SCP domain. Intrachain disulfides connect Cys-77-Cys-155, Cys-94-Cys-170, Cys-150-Cys-167, Cys-189-Cys-196, Cys-192-Cys-201, Cys-205-Cys-237, Cys-214-Cys-231, and Cys-223-Cys-235. The ShKT domain maps to 205-237 (CKQNDVYNNCPDLKKQVGCGHPIMKDCMATCKC).

The protein belongs to the CRISP family. As to expression, expressed by the venom gland.

It localises to the secreted. Functionally, alters a variety of ion channel activities, including voltage-gated potassium channels (Kv), voltage-gated calcium channels (L-, N-, and P-type) (Cav) and ryanodine receptors (RyR). Is toxic to mice (causes lethargy, partial paralysis of rear limbs and lowering of body temperature). The sequence is that of Cysteine-rich venom protein helothermine from Heloderma horridum horridum (Mexican beaded lizard).